We begin with the raw amino-acid sequence, 253 residues long: Probable glutathione transferase omega-2 (253 aa).

Residues Gly-25–Arg-105 form the GST N-terminal domain. The active-site Nucleophile is the Cys-35. Residues Lys-62, Val-75, and Glu-89–Ser-90 contribute to the glutathione site. In terms of domain architecture, GST C-terminal spans Asp-110–Phe-238.

The protein belongs to the GST superfamily. Omega family.

The enzyme catalyses RX + glutathione = an S-substituted glutathione + a halide anion + H(+). It carries out the reaction L-dehydroascorbate + 2 glutathione = glutathione disulfide + L-ascorbate. It catalyses the reaction methylarsonate + 2 glutathione + H(+) = methylarsonous acid + glutathione disulfide + H2O. Exhibits glutathione-dependent thiol transferase activity. Has dehydroascorbate reductase activity and may contribute to the recycling of ascorbic acid. Participates in the biotransformation of inorganic arsenic and reduces monomethylarsonic acid (MMA). The chain is Probable glutathione transferase omega-2 from Caenorhabditis briggsae.